A 362-amino-acid polypeptide reads, in one-letter code: Peptide chain release factor 1 (362 aa).

The residue at position 238 (Gln238) is an N5-methylglutamine.

The protein belongs to the prokaryotic/mitochondrial release factor family. In terms of processing, methylated by PrmC. Methylation increases the termination efficiency of RF1.

The protein resides in the cytoplasm. Peptide chain release factor 1 directs the termination of translation in response to the peptide chain termination codons UAG and UAA. In Psychrobacter arcticus (strain DSM 17307 / VKM B-2377 / 273-4), this protein is Peptide chain release factor 1.